The chain runs to 255 residues: 4-hydroxy-tetrahydrodipicolinate reductase (255 aa).

Residues 9-14, Asp35, 89-91, and 115-118 contribute to the NAD(+) site; these read GFKGKM, GTT, and APNF. His145 serves as the catalytic Proton donor/acceptor. (S)-2,3,4,5-tetrahydrodipicolinate is bound at residue His146. The active-site Proton donor is Lys149. Residue 155 to 156 coordinates (S)-2,3,4,5-tetrahydrodipicolinate; it reads GT.

It belongs to the DapB family.

It localises to the cytoplasm. The catalysed reaction is (S)-2,3,4,5-tetrahydrodipicolinate + NAD(+) + H2O = (2S,4S)-4-hydroxy-2,3,4,5-tetrahydrodipicolinate + NADH + H(+). It carries out the reaction (S)-2,3,4,5-tetrahydrodipicolinate + NADP(+) + H2O = (2S,4S)-4-hydroxy-2,3,4,5-tetrahydrodipicolinate + NADPH + H(+). It functions in the pathway amino-acid biosynthesis; L-lysine biosynthesis via DAP pathway; (S)-tetrahydrodipicolinate from L-aspartate: step 4/4. Its function is as follows. Catalyzes the conversion of 4-hydroxy-tetrahydrodipicolinate (HTPA) to tetrahydrodipicolinate. This Streptococcus pneumoniae (strain 70585) protein is 4-hydroxy-tetrahydrodipicolinate reductase.